Reading from the N-terminus, the 476-residue chain is Bifunctional protein HldE (476 aa).

Positions 1–319 (MKISLPAFEK…AALNLSHGES (319 aa)) are ribokinase. Residue 195–198 (NMSE) coordinates ATP. Residue Asp-264 is part of the active site. Residues 345–476 (MTNGCFDILH…AIIENIMAKQ (132 aa)) form a cytidylyltransferase region.

This sequence in the N-terminal section; belongs to the carbohydrate kinase PfkB family. It in the C-terminal section; belongs to the cytidylyltransferase family. Homodimer.

The catalysed reaction is D-glycero-beta-D-manno-heptose 7-phosphate + ATP = D-glycero-beta-D-manno-heptose 1,7-bisphosphate + ADP + H(+). It carries out the reaction D-glycero-beta-D-manno-heptose 1-phosphate + ATP + H(+) = ADP-D-glycero-beta-D-manno-heptose + diphosphate. Its pathway is nucleotide-sugar biosynthesis; ADP-L-glycero-beta-D-manno-heptose biosynthesis; ADP-L-glycero-beta-D-manno-heptose from D-glycero-beta-D-manno-heptose 7-phosphate: step 1/4. It functions in the pathway nucleotide-sugar biosynthesis; ADP-L-glycero-beta-D-manno-heptose biosynthesis; ADP-L-glycero-beta-D-manno-heptose from D-glycero-beta-D-manno-heptose 7-phosphate: step 3/4. Catalyzes the phosphorylation of D-glycero-D-manno-heptose 7-phosphate at the C-1 position to selectively form D-glycero-beta-D-manno-heptose-1,7-bisphosphate. Its function is as follows. Catalyzes the ADP transfer from ATP to D-glycero-beta-D-manno-heptose 1-phosphate, yielding ADP-D-glycero-beta-D-manno-heptose. The chain is Bifunctional protein HldE from Shewanella loihica (strain ATCC BAA-1088 / PV-4).